The chain runs to 334 residues: Protein-methionine-sulfoxide reductase catalytic subunit MsrP (334 aa).

Positions 1 to 44 (MKKNQFLKESDVTAESVFFMKRRQVLKALGISAAAFSLPHAAHA) form a signal peptide, tat-type signal. Mo-molybdopterin contacts are provided by residues Asn-88, 91–92 (YE), Cys-146, Thr-181, Asn-233, Arg-238, and 249–251 (GIK).

The protein belongs to the MsrP family. In terms of assembly, heterodimer of a catalytic subunit (MsrP) and a heme-binding subunit (MsrQ). The cofactor is Mo-molybdopterin. In terms of processing, predicted to be exported by the Tat system. The position of the signal peptide cleavage has not been experimentally proven.

The protein localises to the periplasm. It catalyses the reaction L-methionyl-[protein] + a quinone + H2O = L-methionyl-(S)-S-oxide-[protein] + a quinol. The enzyme catalyses L-methionyl-[protein] + a quinone + H2O = L-methionyl-(R)-S-oxide-[protein] + a quinol. In terms of biological role, part of the MsrPQ system that repairs oxidized periplasmic proteins containing methionine sulfoxide residues (Met-O), using respiratory chain electrons. Thus protects these proteins from oxidative-stress damage caused by reactive species of oxygen and chlorine generated by the host defense mechanisms. MsrPQ is essential for the maintenance of envelope integrity under bleach stress, rescuing a wide series of structurally unrelated periplasmic proteins from methionine oxidation, including the primary periplasmic chaperone SurA and the lipoprotein Pal. The catalytic subunit MsrP is non-stereospecific, being able to reduce both (R-) and (S-) diastereoisomers of methionine sulfoxide. The sequence is that of Protein-methionine-sulfoxide reductase catalytic subunit MsrP from Escherichia coli O6:H1 (strain CFT073 / ATCC 700928 / UPEC).